The primary structure comprises 316 residues: Homoserine kinase (316 aa).

97-107 (PHSRGLGSSAA) contributes to the ATP binding site.

It belongs to the GHMP kinase family. Homoserine kinase subfamily.

The protein localises to the cytoplasm. The catalysed reaction is L-homoserine + ATP = O-phospho-L-homoserine + ADP + H(+). The protein operates within amino-acid biosynthesis; L-threonine biosynthesis; L-threonine from L-aspartate: step 4/5. Catalyzes the ATP-dependent phosphorylation of L-homoserine to L-homoserine phosphate. This chain is Homoserine kinase, found in Mycobacterium tuberculosis (strain ATCC 25618 / H37Rv).